A 550-amino-acid chain; its full sequence is Arginine--tRNA ligase (550 aa).

Residues 130–140 (ANPTGPIHLGG) carry the 'HIGH' region motif.

Belongs to the class-I aminoacyl-tRNA synthetase family. Monomer.

Its subcellular location is the cytoplasm. The enzyme catalyses tRNA(Arg) + L-arginine + ATP = L-arginyl-tRNA(Arg) + AMP + diphosphate. This chain is Arginine--tRNA ligase, found in Rhodococcus opacus (strain B4).